Reading from the N-terminus, the 486-residue chain is Glutamyl-tRNA(Gln) amidotransferase subunit A (486 aa).

Residues K79 and S154 each act as charge relay system in the active site. The Acyl-ester intermediate role is filled by S178.

This sequence belongs to the amidase family. GatA subfamily. In terms of assembly, heterotrimer of A, B and C subunits.

The enzyme catalyses L-glutamyl-tRNA(Gln) + L-glutamine + ATP + H2O = L-glutaminyl-tRNA(Gln) + L-glutamate + ADP + phosphate + H(+). In terms of biological role, allows the formation of correctly charged Gln-tRNA(Gln) through the transamidation of misacylated Glu-tRNA(Gln) in organisms which lack glutaminyl-tRNA synthetase. The reaction takes place in the presence of glutamine and ATP through an activated gamma-phospho-Glu-tRNA(Gln). This Myxococcus xanthus (strain DK1622) protein is Glutamyl-tRNA(Gln) amidotransferase subunit A.